Here is a 1038-residue protein sequence, read N- to C-terminus: Translation initiation factor IF-2 (1038 aa).

The interval 48 to 426 (DALQGPGGNA…RQRRQEYEAM (379 aa)) is disordered. Residues 58 to 87 (GKSAAKPGAPRKAAPAKPAAPSPAAAARPA) are compositionally biased toward low complexity. Pro residues predominate over residues 88 to 99 (APKPGAPAPKPA). Positions 100-114 (EAPSSTPAAPSAPSA) are enriched in low complexity. The segment covering 115–125 (GPRPGPKPAPK) has biased composition (pro residues). Residues 126 to 141 (AAPVTPVPAAEFSAPA) are compositionally biased toward low complexity. The segment covering 142 to 153 (PAQPAAPQPQAP) has biased composition (pro residues). Positions 177–199 (DGGRDGGQRDGGRGGERGGDRPA) are enriched in basic and acidic residues. Over residues 200 to 219 (RPAGQGAPRPGGARPAGPRP) the composition is skewed to low complexity. Positions 261 to 277 (SGPGGAPRPQGGQGQGG) are enriched in gly residues. The span at 299-315 (GNRPNPGMMPQRPAAGP) shows a compositional bias: low complexity. Residues 319 to 406 (PGGGGRGPGG…GTQGAFGRPG (88 aa)) are compositionally biased toward gly residues. Over residues 410-419 (RRGRKSKRQR) the composition is skewed to basic residues. The region spanning 531-703 (SRPPVVTVMG…VVLTADASLD (173 aa)) is the tr-type G domain. The interval 540 to 547 (GHVDHGKT) is G1. 540-547 (GHVDHGKT) serves as a coordination point for GTP. The G2 stretch occupies residues 565-569 (GITQH). The tract at residues 590-593 (DTPG) is G3. GTP-binding positions include 590–594 (DTPGH) and 644–647 (NKID). Residues 644–647 (NKID) are G4. The tract at residues 680 to 682 (SAK) is G5.

The protein belongs to the TRAFAC class translation factor GTPase superfamily. Classic translation factor GTPase family. IF-2 subfamily.

It localises to the cytoplasm. One of the essential components for the initiation of protein synthesis. Protects formylmethionyl-tRNA from spontaneous hydrolysis and promotes its binding to the 30S ribosomal subunits. Also involved in the hydrolysis of GTP during the formation of the 70S ribosomal complex. The protein is Translation initiation factor IF-2 of Streptomyces griseus subsp. griseus (strain JCM 4626 / CBS 651.72 / NBRC 13350 / KCC S-0626 / ISP 5235).